The primary structure comprises 137 residues: Large ribosomal subunit protein uL16 (137 aa).

The protein belongs to the universal ribosomal protein uL16 family. As to quaternary structure, part of the 50S ribosomal subunit.

Functionally, binds 23S rRNA and is also seen to make contacts with the A and possibly P site tRNAs. This chain is Large ribosomal subunit protein uL16, found in Magnetococcus marinus (strain ATCC BAA-1437 / JCM 17883 / MC-1).